The following is a 362-amino-acid chain: 3-dehydroquinate synthase (362 aa).

NAD(+)-binding positions include 73-78 (DAEAGK), 107-111 (GAATD), 131-132 (TT), Lys144, Lys153, and 171-174 (TLQT). Residues Glu186, His249, and His265 each contribute to the Zn(2+) site.

This sequence belongs to the sugar phosphate cyclases superfamily. Dehydroquinate synthase family. The cofactor is NAD(+). Co(2+) is required as a cofactor. It depends on Zn(2+) as a cofactor.

The protein resides in the cytoplasm. The catalysed reaction is 7-phospho-2-dehydro-3-deoxy-D-arabino-heptonate = 3-dehydroquinate + phosphate. Its pathway is metabolic intermediate biosynthesis; chorismate biosynthesis; chorismate from D-erythrose 4-phosphate and phosphoenolpyruvate: step 2/7. Catalyzes the conversion of 3-deoxy-D-arabino-heptulosonate 7-phosphate (DAHP) to dehydroquinate (DHQ). In Mycobacterium bovis (strain ATCC BAA-935 / AF2122/97), this protein is 3-dehydroquinate synthase.